The following is a 935-amino-acid chain: GPI ethanolamine phosphate transferase 1 (935 aa).

Residues 1 to 5 are Cytoplasmic-facing; that stretch reads MFGRL. The helical transmembrane segment at 6 to 26 threads the bilayer; sequence LLLGILFHVVFLKSIFDIYFV. Topologically, residues 27 to 449 are lumenal; that stretch reads TPLIHGMKQY…LQRYDWLLLR (423 aa). Residues Asn86, Asn134, Asn315, and Asn398 are each glycosylated (N-linked (GlcNAc...) asparagine). A helical transmembrane segment spans residues 450–470; sequence SIVFFGYLSWIGYVICFVFSL. Residues 471–483 are Cytoplasmic-facing; it reads NIEPSSKIVKPVS. Residues 484–503 form a helical membrane-spanning segment; sequence VVKRVAFNIPFLLICIFFYI. The Lumenal segment spans residues 504–509; sequence QSSPPF. The chain crosses the membrane as a helical span at residues 510-530; sequence YYGYALFPTIFLQLIHSIFPN. The Cytoplasmic segment spans residues 531 to 547; it reads TKLGFKNFLTVAKQKHG. A helical membrane pass occupies residues 548–568; it reads FSLLKILFISLCILCLLQFIV. The Lumenal segment spans residues 569–576; the sequence is YSYFHREG. The helical transmembrane segment at 577 to 597 threads the bilayer; that stretch reads FSVILMGLAAWPWLLHADYAF. At 598-600 the chain is on the cytoplasmic side; it reads SHK. Residues 601–621 form a helical membrane-spanning segment; sequence TISVSWSVLTSLLCFFTILPV. The Lumenal portion of the chain corresponds to 622–626; sequence NKKES. The helical transmembrane segment at 627-647 threads the bilayer; the sequence is LLFIFAGGFAMSVAGVFYILY. The Cytoplasmic segment spans residues 648 to 663; the sequence is RRNQAFQYSSTVTNKQ. Residues 664–684 form a helical membrane-spanning segment; the sequence is LVLQVLIIMATVPVTLKIADS. Over 685 to 688 the chain is Lumenal; it reads LQRN. Residues 689-709 form a helical membrane-spanning segment; that stretch reads IAIPPILRLVAFGLFITSYII. Residues 710–737 lie on the Cytoplasmic side of the membrane; the sequence is PSHHIRSCKHYFLDRLAILFLTFSPTMC. A helical transmembrane segment spans residues 738 to 758; it reads MLSISFEALFYVVLFITLGLW. Residues 759 to 792 lie on the Lumenal side of the membrane; that stretch reads MELETELQKYTEQLHPEYSRKKDAKFHLSLSHIR. Residues 793–813 form a helical membrane-spanning segment; it reads ISLFFYIFINVAFFGTGNVAS. Over 814–835 the chain is Cytoplasmic; that stretch reads LSTFALDSVKRFIPVFNPVTQG. A helical membrane pass occupies residues 836-856; sequence ALLMYTILVPFIALSAAFGIM. Residues 857–865 lie on the Lumenal side of the membrane; that stretch reads NKRLGGIQQ. Residues 866–886 form a helical membrane-spanning segment; it reads VTFFLAVGMADIVTINFFYLV. The Cytoplasmic portion of the chain corresponds to 887–894; it reads KDEGSWKD. A helical transmembrane segment spans residues 895-915; it reads IGVSISHFCISNFLILFITAL. The Lumenal segment spans residues 916-935; sequence EHASAILCKNITYTIHEKVN. The N-linked (GlcNAc...) asparagine glycan is linked to Asn925.

It belongs to the PIGG/PIGN/PIGO family. PIGN subfamily.

It is found in the endoplasmic reticulum membrane. The protein operates within glycolipid biosynthesis; glycosylphosphatidylinositol-anchor biosynthesis. Functionally, ethanolamine phosphate transferase involved in glycosylphosphatidylinositol-anchor biosynthesis. Transfers ethanolamine phosphate to the first alpha-1,4-linked mannose of the glycosylphosphatidylinositol precursor of GPI-anchor. The polypeptide is GPI ethanolamine phosphate transferase 1 (its8) (Schizosaccharomyces pombe (strain 972 / ATCC 24843) (Fission yeast)).